The chain runs to 38 residues: Large ribosomal subunit protein bL36 (38 aa).

This sequence belongs to the bacterial ribosomal protein bL36 family.

This chain is Large ribosomal subunit protein bL36, found in Alcanivorax borkumensis (strain ATCC 700651 / DSM 11573 / NCIMB 13689 / SK2).